The sequence spans 124 residues: Large ribosomal subunit protein bL12 (124 aa).

Belongs to the bacterial ribosomal protein bL12 family. Homodimer. Part of the ribosomal stalk of the 50S ribosomal subunit. Forms a multimeric L10(L12)X complex, where L10 forms an elongated spine to which 2 to 4 L12 dimers bind in a sequential fashion. Binds GTP-bound translation factors.

Forms part of the ribosomal stalk which helps the ribosome interact with GTP-bound translation factors. Is thus essential for accurate translation. The protein is Large ribosomal subunit protein bL12 of Cupriavidus taiwanensis (strain DSM 17343 / BCRC 17206 / CCUG 44338 / CIP 107171 / LMG 19424 / R1) (Ralstonia taiwanensis (strain LMG 19424)).